We begin with the raw amino-acid sequence, 149 residues long: Cytochrome c-type biogenesis protein CcmE (149 aa).

At 1 to 7 the chain is on the cytoplasmic side; the sequence is MKPRHKK. A helical; Signal-anchor for type II membrane protein transmembrane segment spans residues 8-28; sequence MAVIALSVSALTVAVVLVLNA. The Periplasmic segment spans residues 29–149; sequence FQSNLVFFFS…AKAQKTSLAQ (121 aa). His123 and Tyr127 together coordinate heme.

It belongs to the CcmE/CycJ family.

Its subcellular location is the cell inner membrane. Heme chaperone required for the biogenesis of c-type cytochromes. Transiently binds heme delivered by CcmC and transfers the heme to apo-cytochromes in a process facilitated by CcmF and CcmH. In Nitrosomonas europaea (strain ATCC 19718 / CIP 103999 / KCTC 2705 / NBRC 14298), this protein is Cytochrome c-type biogenesis protein CcmE.